The chain runs to 183 residues: Casparian strip membrane protein 2 (183 aa).

Over M1–S23 the chain is Cytoplasmic. The chain crosses the membrane as a helical span at residues I24–M44. The Extracellular segment spans residues G45–T71. N48 carries N-linked (GlcNAc...) asparagine glycosylation. The chain crosses the membrane as a helical span at residues F72–I92. Residues A93–R104 are Cytoplasmic-facing. A helical transmembrane segment spans residues L105–A125. Residues T126 to S158 are Extracellular-facing. Residues L159 to A179 traverse the membrane as a helical segment. Residues L180–R183 lie on the Cytoplasmic side of the membrane.

This sequence belongs to the Casparian strip membrane proteins (CASP) family. As to quaternary structure, homodimer and heterodimers.

Its subcellular location is the cell membrane. Functionally, regulates membrane-cell wall junctions and localized cell wall deposition. Required for establishment of the Casparian strip membrane domain (CSD) and the subsequent formation of Casparian strips, a cell wall modification of the root endodermis that determines an apoplastic barrier between the intraorganismal apoplasm and the extraorganismal apoplasm and prevents lateral diffusion. The polypeptide is Casparian strip membrane protein 2 (Triticum aestivum (Wheat)).